The sequence spans 1191 residues: Roquin-2 (1191 aa).

Zn(2+) is bound by residues Cys-14, Cys-17, Cys-33, His-35, Cys-38, Cys-50, and Asp-53. Residues 14-54 (CPICYNEFDENVHKPISLGCSHTVCKTCLNKLHRKACPFDQ) form an RING-type; degenerate zinc finger. Positions 91-170 (ENKHYEVAKK…RTVTELILQH (80 aa)) are HEPN-N. The segment at 171–325 (QNPQQLSANL…SIIDKLQSPE (155 aa)) is ROQ. The interval 326–396 (SFAKSVQELT…GLVDFIQNYS (71 aa)) is HEPN-C. Residues 410-438 (KYKTSMCRDLRQQGGCPRGTNCTFAHSQE) form a C3H1-type zinc finger. 2 disordered regions span residues 528–576 (GANG…NSVP) and 644–680 (ESSL…PQPY). Residues 530–546 (NGQNAAGPSADSVTENK) are compositionally biased toward polar residues. Ser-549 carries the phosphoserine modification. Over residues 554–576 (PVSNVAATSAGPSNVGTELNSVP) the composition is skewed to polar residues. Phosphoserine is present on residues Ser-808, Ser-983, and Ser-1119.

In terms of assembly, interacts with EDC4. Interacts with CCR4-NOT deadenylase complex. Interacts with MAP3K5; the interaction is probably stimulus-dependent. Proteolytically cleaved after Arg-509 and Arg-585 by MALT1 in activated CD4(+) T cells; cleavage at Arg-509 and Arg-585 is critical for promoting RC3H1 degradation in response to T-cell receptor (TCR) stimulation, and hence is necessary for prolonging the stability of a set of mRNAs controlling Th17 cell differentiation. Expressed in spleen, testis, ovary and small intestine.

It is found in the cytoplasm. It localises to the P-body. The enzyme catalyses S-ubiquitinyl-[E2 ubiquitin-conjugating enzyme]-L-cysteine + [acceptor protein]-L-lysine = [E2 ubiquitin-conjugating enzyme]-L-cysteine + N(6)-ubiquitinyl-[acceptor protein]-L-lysine.. It functions in the pathway protein modification; protein ubiquitination. With respect to regulation, binding to dsRNA, but not CDE RNA, crosstalks with the E3 ubiquitin ligase activity and may inhibit ubiquitination. Functionally, post-transcriptional repressor of mRNAs containing a conserved stem loop motif, called constitutive decay element (CDE), which is often located in the 3'-UTR, as in HMGXB3, ICOS, IER3, NFKBID, NFKBIZ, PPP1R10, TNF and in many more mRNAs. Binds to CDE and promotes mRNA deadenylation and degradation. This process does not involve miRNAs. In follicular helper T (Tfh) cells, represses of ICOS and TNFRSF4 expression, thus preventing spontaneous Tfh cell differentiation, germinal center B-cell differentiation in the absence of immunization and autoimmunity. In resting or LPS-stimulated macrophages, controls inflammation by suppressing TNF expression. Also recognizes CDE in its own mRNA and in that of paralogous RC3H1, possibly leading to feedback loop regulation. miRNA-binding protein that regulates microRNA homeostasis. Enhances DICER-mediated processing of pre-MIR146a but reduces mature MIR146a levels through an increase of 3' end uridylation. Both inhibits ICOS mRNA expression and they may act together to exert the suppression. Acts as a ubiquitin E3 ligase. Pairs with E2 enzymes UBE2B, UBE2D2, UBE2E2, UBE2E3, UBE2G2, UBE2K and UBE2Q2 and produces polyubiquitin chains. Shows the strongest activity when paired with UBE2N:UBE2V1 or UBE2N:UBE2V2 E2 complexes and generate both short and long polyubiquitin chains. Involved in the ubiquitination of MAP3K5. Able to interact with double-stranded RNA (dsRNA). In Homo sapiens (Human), this protein is Roquin-2 (RC3H2).